A 168-amino-acid chain; its full sequence is Prolyl-tRNA synthetase associated domain-containing protein 1 (168 aa).

It belongs to the PRORSD1 family.

This is Prolyl-tRNA synthetase associated domain-containing protein 1 (prorsd1p) from Xenopus laevis (African clawed frog).